The sequence spans 302 residues: Oxygen-dependent coproporphyrinogen-III oxidase (302 aa).

Serine 94 contributes to the substrate binding site. A divalent metal cation is bound by residues histidine 98 and histidine 108. Residue histidine 108 is the Proton donor of the active site. A substrate-binding site is contributed by 110 to 112 (NVR). The a divalent metal cation site is built by histidine 147 and histidine 177. The segment at 242–277 (YVEFNLVYDRGTLFGLQTGGRTESILMSMPPLVRWQ) is important for dimerization. A substrate-binding site is contributed by 260–262 (GGR).

This sequence belongs to the aerobic coproporphyrinogen-III oxidase family. In terms of assembly, homodimer. A divalent metal cation serves as cofactor.

The protein localises to the cytoplasm. The catalysed reaction is coproporphyrinogen III + O2 + 2 H(+) = protoporphyrinogen IX + 2 CO2 + 2 H2O. It participates in porphyrin-containing compound metabolism; protoporphyrin-IX biosynthesis; protoporphyrinogen-IX from coproporphyrinogen-III (O2 route): step 1/1. Involved in the heme biosynthesis. Catalyzes the aerobic oxidative decarboxylation of propionate groups of rings A and B of coproporphyrinogen-III to yield the vinyl groups in protoporphyrinogen-IX. The chain is Oxygen-dependent coproporphyrinogen-III oxidase from Shewanella sp. (strain ANA-3).